A 432-amino-acid polypeptide reads, in one-letter code: Calcium uptake protein 2, mitochondrial (432 aa).

Residues 1–22 (MAAAAGRSAWLAAWGGRLRRGL) constitute a mitochondrion transit peptide. Residues 169-204 (KPHSGFHVAFKMLDVDGNEMIERKEFVKLQKIISKQ) form the EF-hand 1 domain. Ca(2+) is bound by residues Asp182, Asp184, Asn186, Met188, Glu190, and Glu193. Residue Ser202 is modified to Phosphoserine. Residues 224 to 259 (EPGVNTTLQVRFFGKRGEKKLHYKEFRRFMENLQTE) enclose the EF-hand 2; degenerate domain. The region spanning 290 to 325 (TENKDIYWRNVREKLSVGESISLDEFKSFCHFTTHL) is the EF-hand 3; degenerate domain. The region spanning 359-394 (LSDNLLDTVFKIFDLDGDECLSHGEFLGVLKNRMHR) is the EF-hand 4 domain. Positions 372, 374, 376, 378, and 383 each coordinate Ca(2+).

Belongs to the MICU1 family. MICU2 subfamily. In terms of assembly, heterodimer; disulfide-linked; heterodimerizes with MICU1. Component of the uniplex complex, composed of MCU, EMRE/SMDT1, MICU1 and MICU2 in a 4:4:1:1 stoichiometry. In terms of tissue distribution, predominantly expressed in stomach, intestine, skeletal muscle, kidney, heart, testis, prostate and uterus.

The protein localises to the mitochondrion intermembrane space. Its subcellular location is the mitochondrion inner membrane. Calcium sensor of the mitochondrial calcium uniporter (MCU) channel, which senses calcium level via its EF-hand domains. MICU1 and MICU2 form a disulfide-linked heterodimer that stimulates and inhibits MCU activity, depending on the concentration of calcium. At low calcium levels, MICU1 occludes the pore of the MCU channel, preventing mitochondrial calcium uptake. At higher calcium levels, calcium-binding to MICU1 and MICU2 induces a conformational change that weakens MCU-MICU1 interactions and moves the MICU1-MICU2 heterodimer away from the pore, allowing calcium permeation through the MCU channel. This chain is Calcium uptake protein 2, mitochondrial, found in Mus musculus (Mouse).